The chain runs to 429 residues: Adenylosuccinate synthetase (429 aa).

GTP is bound by residues 12–18 and 40–42; these read GDEGKGK and GHT. D13 acts as the Proton acceptor in catalysis. Mg(2+) contacts are provided by D13 and G40. IMP-binding positions include 13–16, 38–41, T128, R142, Q223, T238, and R302; these read DEGK and NAGH. The Proton donor role is filled by H41. Residue 298-304 coordinates substrate; sequence VNTGRKR. GTP contacts are provided by residues R304, 330–332, and 412–414; these read KLD and GVG.

Belongs to the adenylosuccinate synthetase family. In terms of assembly, homodimer. The cofactor is Mg(2+).

Its subcellular location is the cytoplasm. It catalyses the reaction IMP + L-aspartate + GTP = N(6)-(1,2-dicarboxyethyl)-AMP + GDP + phosphate + 2 H(+). The protein operates within purine metabolism; AMP biosynthesis via de novo pathway; AMP from IMP: step 1/2. Its function is as follows. Plays an important role in the de novo pathway of purine nucleotide biosynthesis. Catalyzes the first committed step in the biosynthesis of AMP from IMP. This is Adenylosuccinate synthetase from Corynebacterium efficiens (strain DSM 44549 / YS-314 / AJ 12310 / JCM 11189 / NBRC 100395).